Consider the following 1002-residue polypeptide: Lon protease homolog, mitochondrial (1002 aa).

The region spanning 102-313 is the Lon N-terminal domain; it reads VIALPLPHRP…LTLELVKKEM (212 aa). 468 to 475 provides a ligand contact to ATP; the sequence is GPPGVGKT. Residues 811-995 enclose the Lon proteolytic domain; that stretch reads QTPVGVVMGL…NEIFDIAFQS (185 aa). Residues Ser-901 and Lys-944 contribute to the active site.

Belongs to the peptidase S16 family. As to quaternary structure, homohexamer or homoheptamer. Organized in a ring with a central cavity.

Its subcellular location is the mitochondrion matrix. The enzyme catalyses Hydrolysis of proteins in presence of ATP.. In terms of biological role, ATP-dependent serine protease that mediates the selective degradation of misfolded, unassembled or oxidatively damaged polypeptides as well as certain short-lived regulatory proteins in the mitochondrial matrix. May also have a chaperone function in the assembly of inner membrane protein complexes. Participates in the regulation of mitochondrial gene expression and in the maintenance of the integrity of the mitochondrial genome. Binds to mitochondrial DNA in a site-specific manner. This chain is Lon protease homolog, mitochondrial, found in Oryza sativa subsp. indica (Rice).